An 848-amino-acid chain; its full sequence is Neuroligin-3 (848 aa).

The signal sequence occupies residues 1–37; that stretch reads MWLRLGPPSLSLSPKPTVGRSLCLTLWFLSLALRAST. Topologically, residues 38 to 709 are extracellular; it reads QAPAPTVNTH…NPRDYSTELS (672 aa). Residue Asn-98 is glycosylated (N-linked (GlcNAc...) asparagine). Cys-106 and Cys-141 are oxidised to a cystine. The tract at residues 170–195 is disordered; sequence RKGGSGAKKQGEDLADNDGDEDEDIR. The segment covering 182–194 has biased composition (acidic residues); sequence DLADNDGDEDEDI. 2 cysteine pairs are disulfide-bonded: Cys-340-Cys-351 and Cys-510-Cys-544. A glycan (N-linked (GlcNAc...) asparagine) is linked at Asn-545. Composition is skewed to polar residues over residues 645–656 and 677–689; these read TKVPPPDTTHSS and AYSNENAQGSWNG. The segment at 645-694 is disordered; the sequence is TKVPPPDTTHSSHITRRPNGKTWSTKRPAISPAYSNENAQGSWNGDQDAG. The chain crosses the membrane as a helical span at residues 710-730; the sequence is VTIAVGASLLFLNVLAFAALY. Topologically, residues 731-848 are cytoplasmic; that stretch reads YRKDKRRQEP…LPHSHSTTRV (118 aa). Ser-745 is modified (phosphoserine). Phosphotyrosine is present on Tyr-792.

It belongs to the type-B carboxylesterase/lipase family. As to quaternary structure, homodimer, and heterodimer with NLGN1 and NLGN2. Interacts with neurexins NRXN1, NRXN2 and NRXN3. Interaction with neurexins is mediated by heparan sulfate glycan modification on neurexin. Interacts (via its C-terminus) with DLG4/PSD-95 (via PDZ domain 3). Expressed in the blood vessel walls (at protein level). Detected in throughout the brain and in spinal cord. Detected in brain, and at lower levels in pancreas islet beta cells.

It localises to the cell membrane. The protein localises to the synapse. Cell surface protein involved in cell-cell-interactions via its interactions with neurexin family members. Plays a role in synapse function and synaptic signal transmission, and may mediate its effects by clustering other synaptic proteins. May promote the initial formation of synapses, but is not essential for this. May also play a role in glia-glia or glia-neuron interactions in the developing peripheral nervous system. The sequence is that of Neuroligin-3 (NLGN3) from Homo sapiens (Human).